Reading from the N-terminus, the 119-residue chain is MVCFSISFNRASFFSAAAPCTSSIPDFALIRPGVAMDSSLDEKNIHRPMIPNAATILMAWLLLTICFIPSFLAQSVQTFLFTNHQPSRLLVFITHVYCLMIKPFVLYFWFLFPLRLPGG.

2 helical membrane passes run A53–A73 and F92–F112.

Its subcellular location is the membrane. This is an uncharacterized protein from Saccharomyces cerevisiae (strain ATCC 204508 / S288c) (Baker's yeast).